A 107-amino-acid chain; its full sequence is Thioredoxin 1 (107 aa).

One can recognise a Thioredoxin domain in the interval 2–107 (SAAAQVTDST…TLSQTLEKHL (106 aa)). A disulfide bond links cysteine 32 and cysteine 35.

Belongs to the thioredoxin family.

Participates in various redox reactions through the reversible oxidation of its active center dithiol to a disulfide and catalyzes dithiol-disulfide exchange reactions. This chain is Thioredoxin 1 (trxA), found in Nostoc sp. (strain PCC 7120 / SAG 25.82 / UTEX 2576).